Consider the following 163-residue polypeptide: NADH-quinone oxidoreductase subunit I (163 aa).

4Fe-4S ferredoxin-type domains lie at leucine 54–glutamate 84 and isoleucine 94–isoleucine 123. Residues cysteine 64, cysteine 67, cysteine 70, cysteine 74, cysteine 103, cysteine 106, cysteine 109, and cysteine 113 each contribute to the [4Fe-4S] cluster site.

The protein belongs to the complex I 23 kDa subunit family. In terms of assembly, NDH-1 is composed of 14 different subunits. Subunits NuoA, H, J, K, L, M, N constitute the membrane sector of the complex. It depends on [4Fe-4S] cluster as a cofactor.

It localises to the cell inner membrane. The catalysed reaction is a quinone + NADH + 5 H(+)(in) = a quinol + NAD(+) + 4 H(+)(out). Functionally, NDH-1 shuttles electrons from NADH, via FMN and iron-sulfur (Fe-S) centers, to quinones in the respiratory chain. The immediate electron acceptor for the enzyme in this species is believed to be ubiquinone. Couples the redox reaction to proton translocation (for every two electrons transferred, four hydrogen ions are translocated across the cytoplasmic membrane), and thus conserves the redox energy in a proton gradient. The sequence is that of NADH-quinone oxidoreductase subunit I from Ruthia magnifica subsp. Calyptogena magnifica.